The following is a 308-amino-acid chain: UDP-N-acetylenolpyruvoylglucosamine reductase (308 aa).

Residues 30–213 enclose the FAD-binding PCMH-type domain; that stretch reads RVGGAAEWFI…KATTQSHLDH (184 aa). The active site involves Arg-176. Residue Ser-227 is the Proton donor of the active site. The active site involves Glu-297.

This sequence belongs to the MurB family. FAD serves as cofactor.

The protein resides in the cytoplasm. It carries out the reaction UDP-N-acetyl-alpha-D-muramate + NADP(+) = UDP-N-acetyl-3-O-(1-carboxyvinyl)-alpha-D-glucosamine + NADPH + H(+). It participates in cell wall biogenesis; peptidoglycan biosynthesis. Its function is as follows. Cell wall formation. In Acaryochloris marina (strain MBIC 11017), this protein is UDP-N-acetylenolpyruvoylglucosamine reductase.